The primary structure comprises 345 residues: Large ribosomal subunit protein uL10 (345 aa).

The disordered stretch occupies residues 303-345 (SLPQTAAPQQTPQPTEAPKEEAQEEKKEGPSEEEIAGSLASLF). Positions 305-318 (PQTAAPQQTPQPTE) are enriched in low complexity. Residues 319–332 (APKEEAQEEKKEGP) show a composition bias toward basic and acidic residues.

This sequence belongs to the universal ribosomal protein uL10 family. Part of the 50S ribosomal subunit. Forms part of the ribosomal stalk which helps the ribosome interact with GTP-bound translation factors. Forms a heptameric L10(L12)2(L12)2(L12)2 complex, where L10 forms an elongated spine to which the L12 dimers bind in a sequential fashion.

Functionally, forms part of the ribosomal stalk, playing a central role in the interaction of the ribosome with GTP-bound translation factors. The polypeptide is Large ribosomal subunit protein uL10 (Pyrobaculum aerophilum (strain ATCC 51768 / DSM 7523 / JCM 9630 / CIP 104966 / NBRC 100827 / IM2)).